A 412-amino-acid chain; its full sequence is Tyrosine--tRNA ligase (412 aa).

Tyr38 is an L-tyrosine binding site. Residues 43–52 carry the 'HIGH' region motif; that stretch reads CTANSLHIGS. Residues Tyr170 and Gln174 each coordinate L-tyrosine. The 'KMSKS' region motif lies at 230–234; that stretch reads KMGKT. Residue Lys233 participates in ATP binding. The S4 RNA-binding domain maps to 343–409; sequence IPISKLLHMW…CGKKRRLKVV (67 aa).

Belongs to the class-I aminoacyl-tRNA synthetase family. TyrS type 1 subfamily. Homodimer.

It is found in the cytoplasm. The enzyme catalyses tRNA(Tyr) + L-tyrosine + ATP = L-tyrosyl-tRNA(Tyr) + AMP + diphosphate + H(+). Functionally, catalyzes the attachment of tyrosine to tRNA(Tyr) in a two-step reaction: tyrosine is first activated by ATP to form Tyr-AMP and then transferred to the acceptor end of tRNA(Tyr). The chain is Tyrosine--tRNA ligase from Anaplasma phagocytophilum (strain HZ).